The sequence spans 190 residues: Nucleoside triphosphate pyrophosphatase (190 aa).

The Proton acceptor role is filled by Asp69.

This sequence belongs to the Maf family. A divalent metal cation serves as cofactor.

It localises to the cytoplasm. It carries out the reaction a ribonucleoside 5'-triphosphate + H2O = a ribonucleoside 5'-phosphate + diphosphate + H(+). The enzyme catalyses a 2'-deoxyribonucleoside 5'-triphosphate + H2O = a 2'-deoxyribonucleoside 5'-phosphate + diphosphate + H(+). Functionally, nucleoside triphosphate pyrophosphatase. May have a dual role in cell division arrest and in preventing the incorporation of modified nucleotides into cellular nucleic acids. The chain is Nucleoside triphosphate pyrophosphatase from Helicobacter pylori (strain G27).